We begin with the raw amino-acid sequence, 494 residues long: 3-octaprenyl-4-hydroxybenzoate carboxy-lyase (494 aa).

A Mn(2+)-binding site is contributed by asparagine 172. Prenylated FMN contacts are provided by residues 175 to 177, 189 to 191, and 194 to 195; these read IYR, RWL, and RG. Position 238 (glutamate 238) interacts with Mn(2+). Residue aspartate 294 is the Proton donor of the active site.

It belongs to the UbiD family. In terms of assembly, homohexamer. It depends on prenylated FMN as a cofactor. The cofactor is Mn(2+).

It localises to the cell membrane. It carries out the reaction a 4-hydroxy-3-(all-trans-polyprenyl)benzoate + H(+) = a 2-(all-trans-polyprenyl)phenol + CO2. It participates in cofactor biosynthesis; ubiquinone biosynthesis. Catalyzes the decarboxylation of 3-octaprenyl-4-hydroxy benzoate to 2-octaprenylphenol, an intermediate step in ubiquinone biosynthesis. The sequence is that of 3-octaprenyl-4-hydroxybenzoate carboxy-lyase from Janthinobacterium sp. (strain Marseille) (Minibacterium massiliensis).